Reading from the N-terminus, the 263-residue chain is 4-hydroxy-2-oxo-heptane-1,7-dioate aldolase (263 aa).

The active-site Proton acceptor is the H45. Position 147 (Q147) interacts with substrate. E149 provides a ligand contact to a divalent metal cation. Residues A174 and D175 each contribute to the substrate site. A divalent metal cation is bound at residue D175.

It belongs to the HpcH/HpaI aldolase family. As to quaternary structure, homohexamer; trimer of dimers. A divalent metal cation serves as cofactor.

The catalysed reaction is 4-hydroxy-2-oxoheptanedioate = succinate semialdehyde + pyruvate. It participates in aromatic compound metabolism; 4-hydroxyphenylacetate degradation; pyruvate and succinate semialdehyde from 4-hydroxyphenylacetate: step 7/7. In terms of biological role, catalyzes the reversible retro-aldol cleavage of 4-hydroxy-2-ketoheptane-1,7-dioate (HKHD) to pyruvate and succinic semialdehyde. The chain is 4-hydroxy-2-oxo-heptane-1,7-dioate aldolase from Salmonella heidelberg (strain SL476).